The chain runs to 125 residues: Phosphoribosyl-AMP cyclohydrolase (125 aa).

Aspartate 74 contributes to the Mg(2+) binding site. Cysteine 75 serves as a coordination point for Zn(2+). The Mg(2+) site is built by aspartate 76 and aspartate 78. 2 residues coordinate Zn(2+): cysteine 92 and cysteine 99.

Belongs to the PRA-CH family. As to quaternary structure, homodimer. Mg(2+) is required as a cofactor. It depends on Zn(2+) as a cofactor.

It localises to the cytoplasm. The enzyme catalyses 1-(5-phospho-beta-D-ribosyl)-5'-AMP + H2O = 1-(5-phospho-beta-D-ribosyl)-5-[(5-phospho-beta-D-ribosylamino)methylideneamino]imidazole-4-carboxamide. Its pathway is amino-acid biosynthesis; L-histidine biosynthesis; L-histidine from 5-phospho-alpha-D-ribose 1-diphosphate: step 3/9. In terms of biological role, catalyzes the hydrolysis of the adenine ring of phosphoribosyl-AMP. This chain is Phosphoribosyl-AMP cyclohydrolase, found in Desulfatibacillum aliphaticivorans.